Here is an 83-residue protein sequence, read N- to C-terminus: Small ribosomal subunit protein bS16 (83 aa).

Belongs to the bacterial ribosomal protein bS16 family.

This Acinetobacter baumannii (strain AB307-0294) protein is Small ribosomal subunit protein bS16.